We begin with the raw amino-acid sequence, 206 residues long: Geminin (206 aa).

Residues 1–18 (MNLSMKQKQEGAQENVKN) show a composition bias toward polar residues. Positions 1 to 42 (MNLSMKQKQEGAQENVKNSPVPRRTLKMIQPSADGSLVGREN) are disordered. Lysine 27 carries the N6-acetyllysine modification. Residues serine 36, serine 63, and serine 64 each carry the phosphoserine modification. The segment at 79-158 (TQEAFDLISK…AEVIERLSNE (80 aa)) is necessary and sufficient for interaction with IDAS and CDT1. A coiled-coil region spans residues 91–141 (PSSQYWKEVAEQRRKALYEALKENEKLHKEIEQKDSEIARLRKENKDLAEV). Positions 157–206 (NEPLDNFESPDSQEFDSEEEAVEYSELEDSGAGTCAEETVSSSTDARPCT) are disordered. Positions 167-185 (DSQEFDSEEEAVEYSELED) are enriched in acidic residues. The segment at 167–187 (DSQEFDSEEEAVEYSELEDSG) is homeodomain binding. Serine 181 carries the post-translational modification Phosphoserine; by CK2. A compositionally biased stretch (polar residues) spans 195–206 (TVSSSTDARPCT).

Belongs to the geminin family. Homotetramer. Interacts with CDT1; this inhibits binding of the MCM complex to origins of replication. The complex with CDT1 exists in two forms, a 'permissive' heterotrimer and an 'inhibitory' heterohexamer. Interacts (via coiled-coil domain) with IDAS (via coiled-coil domain); this targets GMNN to the nucleus. The heterodimer formed by GMNN and MCIDAS has much lower affinity for CDT1 than the GMNN homodimer. Interacts with a subset of Hox proteins, affinity increasing from anterior to posterior types, the strongest interaction being with HOXB1, HOXC9 and HOXD10. Interacts with LRWD1 from G1/S to mitosis. Post-translationally, phosphorylated during mitosis. Phosphorylation at Ser-181 by CK2 results in enhanced binding to Hox proteins and more potent inhibitory effect on Hox transcriptional activity.

It is found in the cytoplasm. It localises to the nucleus. Functionally, inhibits DNA replication by preventing the incorporation of MCM complex into pre-replication complex (pre-RC). It is degraded during the mitotic phase of the cell cycle. Its destruction at the metaphase-anaphase transition permits replication in the succeeding cell cycle. Inhibits histone acetyltransferase activity of KAT7/HBO1 in a CDT1-dependent manner, inhibiting histone H4 acetylation and DNA replication licensing. Inhibits the transcriptional activity of a subset of Hox proteins, enrolling them in cell proliferative control. This is Geminin (Gmnn) from Mus musculus (Mouse).